Here is a 475-residue protein sequence, read N- to C-terminus: Tetratricopeptide repeat protein 29 (475 aa).

7 TPR repeats span residues 92–131 (DALR…EDAE), 136–173 (FEDV…AQLI), 182–215 (AEAH…TQGR), 234–267 (LRTY…AKEG), 274–307 (AEAS…STDL), 314–347 (GRGY…ARNN), and 354–387 (VRAS…TVEL). Residues 437–475 (IEPDPVTEEFRGSTVEAVSQNSERLEELSRFPGDQKNET) form a disordered region. Positions 459-475 (ERLEELSRFPGDQKNET) are enriched in basic and acidic residues.

As to expression, expressed in spermatozoa (at protein level).

Its subcellular location is the cytoplasm. The protein localises to the cytoskeleton. It localises to the flagellum axoneme. Functionally, axonemal protein which is implicated in axonemal and/or peri-axonemal structure assembly and regulates flagellum assembly and beating and therefore sperm motility. In Homo sapiens (Human), this protein is Tetratricopeptide repeat protein 29 (TTC29).